Reading from the N-terminus, the 433-residue chain is Glutamate-1-semialdehyde 2,1-aminomutase (433 aa).

An N6-(pyridoxal phosphate)lysine modification is found at Lys270.

This sequence belongs to the class-III pyridoxal-phosphate-dependent aminotransferase family. HemL subfamily. In terms of assembly, homodimer. Pyridoxal 5'-phosphate is required as a cofactor.

It is found in the cytoplasm. It carries out the reaction (S)-4-amino-5-oxopentanoate = 5-aminolevulinate. It participates in porphyrin-containing compound metabolism; protoporphyrin-IX biosynthesis; 5-aminolevulinate from L-glutamyl-tRNA(Glu): step 2/2. This Symbiobacterium thermophilum (strain DSM 24528 / JCM 14929 / IAM 14863 / T) protein is Glutamate-1-semialdehyde 2,1-aminomutase.